Here is a 180-residue protein sequence, read N- to C-terminus: Translation initiation factor IF-3 (180 aa).

It belongs to the IF-3 family. Monomer.

Its subcellular location is the cytoplasm. Its function is as follows. IF-3 binds to the 30S ribosomal subunit and shifts the equilibrium between 70S ribosomes and their 50S and 30S subunits in favor of the free subunits, thus enhancing the availability of 30S subunits on which protein synthesis initiation begins. This Caldanaerobacter subterraneus subsp. tengcongensis (strain DSM 15242 / JCM 11007 / NBRC 100824 / MB4) (Thermoanaerobacter tengcongensis) protein is Translation initiation factor IF-3.